The sequence spans 121 residues: Dihydroneopterin aldolase (121 aa).

The substrate site is built by Glu16 and Met111.

It belongs to the archaeal dihydroneopterin aldolase family. As to quaternary structure, homotetramer.

The catalysed reaction is 7,8-dihydroneopterin = 6-hydroxymethyl-7,8-dihydropterin + glycolaldehyde. It functions in the pathway cofactor biosynthesis; 5,6,7,8-tetrahydromethanopterin biosynthesis. Its function is as follows. Catalyzes the conversion of 7,8-dihydroneopterin (H2Neo) to 6-hydroxymethyl-7,8-dihydropterin (6-HMD). This is Dihydroneopterin aldolase from Methanopyrus kandleri (strain AV19 / DSM 6324 / JCM 9639 / NBRC 100938).